Reading from the N-terminus, the 334-residue chain is N-acetyl-gamma-glutamyl-phosphate reductase (334 aa).

Residue cysteine 154 is part of the active site.

Belongs to the NAGSA dehydrogenase family. Type 1 subfamily.

It localises to the cytoplasm. It carries out the reaction N-acetyl-L-glutamate 5-semialdehyde + phosphate + NADP(+) = N-acetyl-L-glutamyl 5-phosphate + NADPH + H(+). Its pathway is amino-acid biosynthesis; L-arginine biosynthesis; N(2)-acetyl-L-ornithine from L-glutamate: step 3/4. Its function is as follows. Catalyzes the NADPH-dependent reduction of N-acetyl-5-glutamyl phosphate to yield N-acetyl-L-glutamate 5-semialdehyde. The protein is N-acetyl-gamma-glutamyl-phosphate reductase of Buchnera aphidicola subsp. Acyrthosiphon pisum (strain 5A).